The primary structure comprises 300 residues: MNDKLSYYKQQVGSFLRQQPGWWMQYINRCIDDQITVNAGYLAYVTLLSLVPLIAVGVAIFSAFPGFESTRLAIESFLFTNFVPTSSDVIKEHISSFAGNANQMTAVGIGFLAAIALLLIRNVDATLNRIWRIKKKRPMMISFAVYWMVLSLGPVFLGGSIAVTSYIVSLVSFADQGIPGFSGFLLKLLPYGISMVGFIMLYTLVPNTRVSFKAAIPGALFAAMLFELTKKGFALYISHFPSYEVIYGAVATIPILFVWIYLSWIVVLLGAELTACISPENIEDTPEIELDEQENTKDTL.

The next 6 membrane-spanning stretches (helical) occupy residues 47–67 (LLSL…FPGF), 100–120 (NANQ…LLLI), 143–163 (FAVY…SIAV), 181–201 (FSGF…FIML), 215–235 (AIPG…GFAL), and 249–269 (AVAT…VVLL).

The protein belongs to the UPF0761 family.

Its subcellular location is the cell inner membrane. The polypeptide is UPF0761 membrane protein PSHAa0171 (Pseudoalteromonas translucida (strain TAC 125)).